A 443-amino-acid chain; its full sequence is Glutamyl-tRNA reductase (443 aa).

Substrate is bound by residues Thr49–Arg52, Ser109, Glu114–Gln116, and Gln120. Cys50 acts as the Nucleophile in catalysis. Position 189–194 (Gly189–Ser194) interacts with NADP(+).

This sequence belongs to the glutamyl-tRNA reductase family. As to quaternary structure, homodimer.

The enzyme catalyses (S)-4-amino-5-oxopentanoate + tRNA(Glu) + NADP(+) = L-glutamyl-tRNA(Glu) + NADPH + H(+). Its pathway is porphyrin-containing compound metabolism; protoporphyrin-IX biosynthesis; 5-aminolevulinate from L-glutamyl-tRNA(Glu): step 1/2. In terms of biological role, catalyzes the NADPH-dependent reduction of glutamyl-tRNA(Glu) to glutamate 1-semialdehyde (GSA). This is Glutamyl-tRNA reductase from Staphylococcus saprophyticus subsp. saprophyticus (strain ATCC 15305 / DSM 20229 / NCIMB 8711 / NCTC 7292 / S-41).